The primary structure comprises 138 residues: Invertebrate-type lysozyme 6 (138 aa).

The first 18 residues, 1-18, serve as a signal peptide directing secretion; that stretch reads MFVKLCGILAFAVTYASS. The region spanning 19–138 is the I-type lysozyme domain; sequence DCLQCICKKE…WNGIKGLGCS (120 aa). Cystine bridges form between Cys20–Cys106, Cys25–Cys31, Cys36–Cys45, Cys58–Cys86, Cys76–Cys82, and Cys98–Cys120. Glu28 (proton donor) is an active-site residue. Residue Asp39 is the Nucleophile of the active site. 51–57 is a binding site for substrate; sequence KLSYYKD. Substrate is bound by residues Tyr90 and 113-115; that span reads HNG.

Belongs to the glycosyl hydrolase 22 family. Type-I lysozyme subfamily. As to expression, expressed in pharyngeal gland cells and duct projections, coelomocytes and intestine.

The catalysed reaction is Hydrolysis of (1-&gt;4)-beta-linkages between N-acetylmuramic acid and N-acetyl-D-glucosamine residues in a peptidoglycan and between N-acetyl-D-glucosamine residues in chitodextrins.. Its function is as follows. Has bacteriolytic activity against Gram-positive bacteria. The chain is Invertebrate-type lysozyme 6 from Caenorhabditis elegans.